Here is an 89-residue protein sequence, read N- to C-terminus: Large ribosomal subunit protein bL27 (89 aa).

The disordered stretch occupies residues 1–21; sequence MAHKKAGGSSRNGRDTEGRRL.

Belongs to the bacterial ribosomal protein bL27 family.

The chain is Large ribosomal subunit protein bL27 from Granulibacter bethesdensis (strain ATCC BAA-1260 / CGDNIH1).